The chain runs to 141 residues: uncharacterized protein (141 aa).

The next 3 helical transmembrane spans lie at 32–52 (LIVL…TSII), 69–89 (IIAL…IAGF), and 109–129 (FTGY…PIAY).

The protein localises to the cell membrane. This is an uncharacterized protein from Methanocaldococcus jannaschii (strain ATCC 43067 / DSM 2661 / JAL-1 / JCM 10045 / NBRC 100440) (Methanococcus jannaschii).